Here is a 445-residue protein sequence, read N- to C-terminus: MLCYVTRPDAVLMEVEVEAKANGEDCLNQVCRRLGIIEVDYFGLQFTGSKGESLWLNLRNRISQQMDGLAPYRLKLRVKFFVEPHLILQEQTRHIFFLHIKEALLAGHLLCSPEQAVELSALLAQTKFGDYNQNTAKYNYEELCAKELSSATLNSIVAKHKELEGTSQASAEYQVLQIVSAMENYGIEWHSVRDSEGQKLLIGVGPEGISICKDDFSPINRIAYPVVQMATQSGKNVYLTVTKESGNSIVLLFKMISTRAASGLYRAITETHAFYRCDTVTSAVMMQYSRDLKGHLASLFLNENINLGKKYVFDIKRTSKEVYDHARRALYNAGVVDLVSRNNQSPSHSPLKSSESSMNCSSCEGLSCQQTRVLQEKLRKLKEAMLCMVCCEEEINSTFCPCGHTVCCESCAAQLQSCPVCRSRVEHVQHVYLPTHTSLLNLTVI.

The region spanning 1 to 279 (MLCYVTRPDA…ETHAFYRCDT (279 aa)) is the FERM domain. Fe cation-binding residues include Cys360, Cys363, and Cys368. An RING-type zinc finger spans residues 387-422 (CMVCCEEEINSTFCPCGHTVCCESCAAQLQSCPVCR). The tract at residues 431 to 433 (VYL) is critical for homodimerization.

In terms of assembly, homodimer. Interacts with the E2 ubiquitin-conjugating enzyme, UBE2D1 (via RING-type zinc finger). Interacts with myosin regulatory light chain (MRLC) and TMEM4. Autoubiquitinated. Ubiquitously expressed.

It localises to the cytoplasm. Its subcellular location is the cell membrane. It catalyses the reaction S-ubiquitinyl-[E2 ubiquitin-conjugating enzyme]-L-cysteine + [acceptor protein]-L-lysine = [E2 ubiquitin-conjugating enzyme]-L-cysteine + N(6)-ubiquitinyl-[acceptor protein]-L-lysine.. The protein operates within protein modification; protein ubiquitination. Its activity is regulated as follows. Can bind 1 iron ion per dimer. Iron binding seems to decrease LDLR degradation activity. Its function is as follows. E3 ubiquitin-protein ligase that mediates ubiquitination and subsequent proteasomal degradation of myosin regulatory light chain (MRLC), LDLR, VLDLR and LRP8. Activity depends on E2 enzymes of the UBE2D family. Proteasomal degradation of MRLC leads to inhibit neurite outgrowth in presence of NGF by counteracting the stabilization of MRLC by saposin-like protein (CNPY2/MSAP) and reducing CNPY2-stimulated neurite outgrowth. Acts as a sterol-dependent inhibitor of cellular cholesterol uptake by mediating ubiquitination and subsequent degradation of LDLR. The sequence is that of E3 ubiquitin-protein ligase MYLIP (MYLIP) from Homo sapiens (Human).